A 252-amino-acid chain; its full sequence is MTSHAPDPIHQFEISRLINVSIGNVDFSFTNVSFFIIATVVLSSVFLFISSSSRRLVPTRMQSISEMAYEFVASTLRESAGVQGMKFFPLVFSLFVFILVANFIGLFPYFYTITSQIMITFSLAMLVILTVIGCGFYKHGIGFLKLFVPSGVPVMILPLVTVIEVISFFSRPISLSLRLFANMLAGHITLKVFSGFIVSMVGLGFIGVGGSILPLIMTVAITALEFLVAFLQAYVFTVLTCMYLNDAVHPGH.

The next 6 helical transmembrane spans lie at 29–49 (FTNVSFFIIATVVLSSVFLFI), 87–107 (FFPLVFSLFVFILVANFIGLF), 117–137 (IMITFSLAMLVILTVIGCGFY), 146–166 (LFVPSGVPVMILPLVTVIEVI), 196–216 (FIVSMVGLGFIGVGGSILPLI), and 219–239 (VAITALEFLVAFLQAYVFTVL).

It belongs to the ATPase A chain family. As to quaternary structure, F-type ATPases have 2 components, CF(1) - the catalytic core - and CF(0) - the membrane proton channel. CF(1) has five subunits: alpha(3), beta(3), gamma(1), delta(1), epsilon(1). CF(0) has three main subunits: a(1), b(2) and c(9-12). The alpha and beta chains form an alternating ring which encloses part of the gamma chain. CF(1) is attached to CF(0) by a central stalk formed by the gamma and epsilon chains, while a peripheral stalk is formed by the delta and b chains.

It is found in the cell inner membrane. In terms of biological role, key component of the proton channel; it plays a direct role in the translocation of protons across the membrane. This Bartonella bacilliformis (strain ATCC 35685 / KC583 / Herrer 020/F12,63) protein is ATP synthase subunit a.